Reading from the N-terminus, the 359-residue chain is Aflatoxin B1 aldehyde reductase member 2 (359 aa).

The transit peptide at 1–38 (MLSAASRVVSRAAVHCALRSPPPEARALAMSRPPPPRV) directs the protein to the mitochondrion. Phosphoserine is present on Ser-40. Asp-72 contributes to the NADP(+) binding site. Catalysis depends on Tyr-77, which acts as the Proton donor. Lys-128 is modified (N6-acetyllysine). His-141 lines the substrate pocket. NADP(+) contacts are provided by residues 171 to 172 (SN), Gln-197, 226 to 236 (NPLAGGLLTGK), and Arg-250. Lys-236 carries the N6-succinyllysine modification. The residue at position 255 (Ser-255) is a Phosphoserine. Tyr-260 and Arg-263 together coordinate substrate. 318–326 (SSLEQLEQN) lines the NADP(+) pocket. Arg-359 contacts substrate.

This sequence belongs to the aldo/keto reductase family. Aldo/keto reductase 2 subfamily. Homodimer. As to expression, detected in brain, liver, small intestine and testis, and at lower levels in heart, prostate, skeletal muscle and spleen. Detected in kidney proximal and distal tubules, endothelial cells lining the Bowman's capsules and some cysts. Detected at low levels in lung and pancreas (at protein level). Widely expressed.

The protein resides in the mitochondrion. It localises to the golgi apparatus. It is found in the cytoplasm. It catalyses the reaction 4-hydroxybutanoate + NADP(+) = succinate semialdehyde + NADPH + H(+). Functionally, catalyzes the NADPH-dependent reduction of succinic semialdehyde to gamma-hydroxybutyrate. May have an important role in producing the neuromodulator gamma-hydroxybutyrate (GHB). Has broad substrate specificity. Has NADPH-dependent aldehyde reductase activity towards 2-carboxybenzaldehyde, 2-nitrobenzaldehyde and pyridine-2-aldehyde (in vitro). Can reduce 1,2-naphthoquinone and 9,10-phenanthrenequinone (in vitro). Can reduce the dialdehyde protein-binding form of aflatoxin B1 (AFB1) to the non-binding AFB1 dialcohol. May be involved in protection of liver against the toxic and carcinogenic effects of AFB1, a potent hepatocarcinogen. This Homo sapiens (Human) protein is Aflatoxin B1 aldehyde reductase member 2 (AKR7A2).